Reading from the N-terminus, the 254-residue chain is 5-oxoprolinase subunit A (254 aa).

The protein belongs to the LamB/PxpA family. In terms of assembly, forms a complex composed of PxpA, PxpB and PxpC.

The enzyme catalyses 5-oxo-L-proline + ATP + 2 H2O = L-glutamate + ADP + phosphate + H(+). In terms of biological role, catalyzes the cleavage of 5-oxoproline to form L-glutamate coupled to the hydrolysis of ATP to ADP and inorganic phosphate. The sequence is that of 5-oxoprolinase subunit A from Burkholderia mallei (strain NCTC 10247).